The following is a 394-amino-acid chain: 1-deoxy-D-xylulose 5-phosphate reductoisomerase (394 aa).

NADPH-binding residues include threonine 11, glycine 12, serine 13, isoleucine 14, glycine 37, asparagine 39, and asparagine 126. Residue lysine 127 coordinates 1-deoxy-D-xylulose 5-phosphate. Residue glutamate 128 coordinates NADPH. Aspartate 152 serves as a coordination point for Mn(2+). 1-deoxy-D-xylulose 5-phosphate-binding residues include serine 153, glutamate 154, serine 178, and histidine 201. Glutamate 154 provides a ligand contact to Mn(2+). Glycine 207 provides a ligand contact to NADPH. Serine 214, asparagine 219, lysine 220, and glutamate 223 together coordinate 1-deoxy-D-xylulose 5-phosphate. Mn(2+) is bound at residue glutamate 223.

Belongs to the DXR family. It depends on Mg(2+) as a cofactor. Requires Mn(2+) as cofactor.

It catalyses the reaction 2-C-methyl-D-erythritol 4-phosphate + NADP(+) = 1-deoxy-D-xylulose 5-phosphate + NADPH + H(+). Its pathway is isoprenoid biosynthesis; isopentenyl diphosphate biosynthesis via DXP pathway; isopentenyl diphosphate from 1-deoxy-D-xylulose 5-phosphate: step 1/6. Catalyzes the NADPH-dependent rearrangement and reduction of 1-deoxy-D-xylulose-5-phosphate (DXP) to 2-C-methyl-D-erythritol 4-phosphate (MEP). This Synechocystis sp. (strain ATCC 27184 / PCC 6803 / Kazusa) protein is 1-deoxy-D-xylulose 5-phosphate reductoisomerase.